The sequence spans 229 residues: Glutathione S-transferase 3 (229 aa).

Position 2 is a blocked amino end (Ala) (Ala2). Residues 3–83 (AKPVLYYFNG…YIAGKYNLYG (81 aa)) form the GST N-terminal domain. Residues Tyr9, 54-55 (QV), and 67-68 (QT) contribute to the glutathione site. A GST C-terminal domain is found at 85–207 (DLKERALIDM…LAPGSKRKPI (123 aa)).

The protein belongs to the GST superfamily. Alpha family. Homodimer or heterodimer (with a subunit from group CL-4).

It is found in the cytoplasm. It carries out the reaction RX + glutathione = an S-substituted glutathione + a halide anion + H(+). In terms of biological role, catalyzes the conjugation of GSH to a wide variety of electrophilic alkylating agents. Also involved in the metabolism of lipid hydroperoxides, prostaglandins and leukotriene A4 and in binding of non-substrate hydrophobic ligands such as bile acids, a number of drugs and thyroid hormones. This GST does not exhibit peroxidase activity. This is Glutathione S-transferase 3 from Gallus gallus (Chicken).